Here is a 445-residue protein sequence, read N- to C-terminus: Proline--tRNA ligase (445 aa).

It belongs to the class-II aminoacyl-tRNA synthetase family. ProS type 2 subfamily. Homodimer.

It is found in the cytoplasm. The enzyme catalyses tRNA(Pro) + L-proline + ATP = L-prolyl-tRNA(Pro) + AMP + diphosphate. Catalyzes the attachment of proline to tRNA(Pro) in a two-step reaction: proline is first activated by ATP to form Pro-AMP and then transferred to the acceptor end of tRNA(Pro). The sequence is that of Proline--tRNA ligase from Dinoroseobacter shibae (strain DSM 16493 / NCIMB 14021 / DFL 12).